The chain runs to 129 residues: 3-oxo-4,17-pregnadiene-20-carboxyl-CoA hydratase beta subunit (129 aa).

It belongs to the thioester dehydratase family. As to quaternary structure, heterodimer composed of ChsH1 and ChsH2. Two heterodimers combine to form a heterotetramer. The complex interacts with Ltp2 via the DUF35 C-terminal region of ChsH2. The ChsH1-ChsH2-Ltp2 protein complex is composed of two protomers that form a heterohexameric structure through the Ltp2 dimerization interface.

It catalyses the reaction 3-oxochola-4,17-dien-22-oyl-CoA + H2O = 17-hydroxy-3-oxochol-4-en-22-oyl-CoA. It carries out the reaction (2E)-octenoyl-CoA + H2O = 3-hydroxyoctanoyl-CoA. The enzyme catalyses (2E)-decenoyl-CoA + H2O = 3-hydroxydecanoyl-CoA. Its pathway is steroid metabolism; cholesterol degradation. Its activity is regulated as follows. In the absence of the Ltp2 aldolase, ChsH1/ChsH2 can hydrate only about 30% of the 3-OPDC-CoA substrate. Complete turnover requires the presence of Ltp2. Functionally, involved in cholesterol side chain degradation. Catalyzes the hydration of 3-oxo-4,17-pregnadiene-20-carboxyl-CoA (3-OPDC-CoA) to form 17-hydroxy-3-oxo-4-pregnene-20-carboxyl-CoA (17-HOPC-CoA), in the modified beta-oxidation pathway for cholesterol side chain degradation. Can also use octenoyl-CoA and decenoyl-CoA, with lower efficiency. The sequence is that of 3-oxo-4,17-pregnadiene-20-carboxyl-CoA hydratase beta subunit from Mycobacterium tuberculosis (strain ATCC 25618 / H37Rv).